The sequence spans 965 residues: Kinesin-like protein KIN-7K, chloroplastic (965 aa).

Residues 1-69 (MASRQGSKSR…PQTAQRSKEN (69 aa)) are disordered. Residues 19-28 (STASSTTSSS) are compositionally biased toward low complexity. The span at 29 to 38 (KLYQETSIDG) shows a compositional bias: polar residues. The span at 40–56 (SSPASSSAQSKQQFFSP) shows a compositional bias: low complexity. Residues 69–388 (NVTVTVRFRP…LKFAHRAKHI (320 aa)) form the Kinesin motor domain. 149 to 156 (GVTSSGKT) contributes to the ATP binding site. The stretch at 389 to 483 (EIQAEQNKII…LTKLILVSTK (95 aa)) forms a coiled coil. Positions 551-561 (LLNWLKPKKRD) are enriched in basic residues. Disordered stretches follow at residues 551-633 (LLNW…KMSD) and 842-888 (ATQK…ELRM). The segment covering 564–577 (SSASDQSSVVKSNS) has biased composition (low complexity). Positions 606 to 623 (SEPREDREALEDSSHEME) are enriched in basic and acidic residues. Coiled coils occupy residues 628–703 (SNKM…FVMT) and 738–846 (NRII…TQKS). Residues 851–862 (RNKTGTTTNVRN) show a composition bias toward low complexity. The span at 864–888 (GRRESLAKRQEHDSPSMELKRELRM) shows a compositional bias: basic and acidic residues. Residues 896 to 931 (YEAALGEKEQREAELERILEETKQREAYLENELANM) adopt a coiled-coil conformation. Residues 942–965 (QGADSEISDSISETRQTEQTEGSF) are disordered. Residues 949-965 (SDSISETRQTEQTEGSF) show a composition bias toward polar residues.

The protein belongs to the TRAFAC class myosin-kinesin ATPase superfamily. Kinesin family. KIN-7 subfamily.

Its subcellular location is the plastid. The protein resides in the chloroplast. In Arabidopsis thaliana (Mouse-ear cress), this protein is Kinesin-like protein KIN-7K, chloroplastic.